Reading from the N-terminus, the 359-residue chain is DNA replication and repair protein RecF (359 aa).

Gly30 to Thr37 contributes to the ATP binding site.

This sequence belongs to the RecF family.

The protein resides in the cytoplasm. Its function is as follows. The RecF protein is involved in DNA metabolism; it is required for DNA replication and normal SOS inducibility. RecF binds preferentially to single-stranded, linear DNA. It also seems to bind ATP. This chain is DNA replication and repair protein RecF, found in Flavobacterium johnsoniae (strain ATCC 17061 / DSM 2064 / JCM 8514 / BCRC 14874 / CCUG 350202 / NBRC 14942 / NCIMB 11054 / UW101) (Cytophaga johnsonae).